Reading from the N-terminus, the 399-residue chain is Salivary protein Tsal1 (399 aa).

The N-terminal stretch at 1 to 22 is a signal peptide; it reads MALKLVYGVFTLALLGISSVNA. Asparagine 268 is a glycosylation site (N-linked (GlcNAc...) asparagine).

The protein belongs to the DNA/RNA non-specific endonuclease family. A divalent metal cation is required as a cofactor. In terms of tissue distribution, saliva (at protein level).

It localises to the secreted. Functionally, binds double-stranded DNA (dsDNA) with high affinity. Binds double-stranded RNA. Binds single-stranded DNA with lower affinity and with a preference for purine-rich sequences. Shows residual nuclease activity for dsDNA. May facilitate blood meal intake by lowering the local viscosity created by the release of host DNA. The sequence is that of Salivary protein Tsal1 from Glossina morsitans morsitans (Savannah tsetse fly).